The following is a 97-amino-acid chain: Small ribosomal subunit protein bS6 (97 aa).

Belongs to the bacterial ribosomal protein bS6 family.

Its function is as follows. Binds together with bS18 to 16S ribosomal RNA. The polypeptide is Small ribosomal subunit protein bS6 (rpsF) (Lactococcus lactis subsp. lactis (strain IL1403) (Streptococcus lactis)).